Here is a 614-residue protein sequence, read N- to C-terminus: Probable ATP-dependent RNA helicase DDX5 (614 aa).

Residues 1 to 15 (MSSYSSDRDRGRDRG) are compositionally biased toward basic and acidic residues. The interval 1–39 (MSSYSSDRDRGRDRGFGAPRFGGSRTGPLSGKKFGNPGE) is disordered. Ser-24 is modified (phosphoserine). Lys-32 carries the N6-acetyllysine; alternate modification. Lys-32 participates in a covalent cross-link: Glycyl lysine isopeptide (Lys-Gly) (interchain with G-Cter in SUMO2); alternate. Lys-33 and Lys-40 each carry N6-acetyllysine. A Glycyl lysine isopeptide (Lys-Gly) (interchain with G-Cter in SUMO2) cross-link involves residue Lys-45. Lys-53 is covalently cross-linked (Glycyl lysine isopeptide (Lys-Gly) (interchain with G-Cter in SUMO2); alternate). Lys-53 is covalently cross-linked (Glycyl lysine isopeptide (Lys-Gly) (interchain with G-Cter in SUMO); alternate). Lys-53 participates in a covalent cross-link: Glycyl lysine isopeptide (Lys-Gly) (interchain with G-Cter in SUMO1); alternate. The Q motif signature appears at 94–122 (LNFYEANFPANVMDVIARQNFTEPTAIQA). Residues 114-116 (FTE), Gln-121, and 138-145 (AQTGSGKT) each bind ATP. Residues 125 to 300 (WPVALSGLDM…EDFLKDYIHI (176 aa)) enclose the Helicase ATP-binding domain. Lys-236 bears the N6-acetyllysine mark. Positions 248–251 (DEAD) match the DEAD box motif. Residue Tyr-297 is modified to Phosphotyrosine. The region spanning 328 to 475 (KLIRLMEEIM…AINPKLLQLV (148 aa)) is the Helicase C-terminal domain. Glycyl lysine isopeptide (Lys-Gly) (interchain with G-Cter in SUMO2) cross-links involve residues Lys-340, Lys-343, Lys-388, Lys-391, Lys-411, Lys-437, Lys-451, and Lys-470. The disordered stretch occupies residues 477–504 (DRGSGRSRGRGGMKDDRRDRYSAGKRGG). The transactivation domain stretch occupies residues 477–614 (DRGSGRSRGR…GYPMPTGYSQ (138 aa)). Residue Ser-480 is modified to Phosphoserine. The segment covering 488-498 (GMKDDRRDRYS) has biased composition (basic and acidic residues). A Glycyl lysine isopeptide (Lys-Gly) (interchain with G-Cter in SUMO2) cross-link involves residue Lys-523.

The protein belongs to the DEAD box helicase family. DDX5/DBP2 subfamily. In terms of assembly, identified in the spliceosome C complex. Component of a ribonucleoprotein complex containing mRNAs and RNA-binding proteins including DDX5, HNRNPH2 and SRSF1 as well as splicing regulator ARVCF. Interacts with RBM4; the interaction occurs in an RNA-independent manner. Interacts with AGO1 and AGO2. Interacts with ESR1, AR, EP300, CREBBP, POLR2A, TP53, RUNX2 and HDAC1. Self-associates. Interacts with DDX17. Interacts with BRDT. The large PER complex involved in the repression of transcriptional termination is composed of at least PER2, CDK9, DDX5, DHX9, NCBP1 and POLR2A (active). Interacts with DHX36; this interaction occurs in a RNA-dependent manner. Interacts with NUPR1. Interacts with ERCC6. Interacts with DDX3X in the cytoplasm; this interaction may be more efficient when both proteins are unphosphorylated. In terms of processing, sumoylated; sumoylation, promoted by PIAS1, promotes interaction with HDAC1 and transcriptional repression activity. Sumoylation also significantly increases stability, and reduces polyubiquitination. Post-translationally, polyubiquitinated, leading to proteasomal degradation. Weakly phosphorylated in the G1/S phase of the cell cycle and much more at G2/M, especially at Thr and Tyr residues.

It localises to the nucleus. Its subcellular location is the nucleolus. The protein resides in the cytoplasm. The enzyme catalyses ATP + H2O = ADP + phosphate + H(+). Functionally, involved in the alternative regulation of pre-mRNA splicing; its RNA helicase activity is necessary for increasing tau exon 10 inclusion and occurs in a RBM4-dependent manner. Binds to the tau pre-mRNA in the stem-loop region downstream of exon 10. The rate of ATP hydrolysis is highly stimulated by single-stranded RNA. Involved in transcriptional regulation; the function is independent of the RNA helicase activity. Transcriptional coactivator for androgen receptor AR but probably not ESR1. Synergizes with DDX17 and SRA1 RNA to activate MYOD1 transcriptional activity and involved in skeletal muscle differentiation. Transcriptional coactivator for p53/TP53 and involved in p53/TP53 transcriptional response to DNA damage and p53/TP53-dependent apoptosis. Transcriptional coactivator for RUNX2 and involved in regulation of osteoblast differentiation. Acts as a transcriptional repressor in a promoter-specific manner; the function probably involves association with histone deacetylases, such as HDAC1. As component of a large PER complex is involved in the inhibition of 3' transcriptional termination of circadian target genes such as PER1 and NR1D1 and the control of the circadian rhythms. In Mus musculus (Mouse), this protein is Probable ATP-dependent RNA helicase DDX5 (Ddx5).